The sequence spans 400 residues: Phosphoglycerate kinase (400 aa).

Residues 21-23 (DFN), Arg-36, 59-62 (HLGR), Arg-119, and Arg-160 each bind substrate. ATP contacts are provided by residues Lys-211, Glu-329, and 356-359 (GGDS).

The protein belongs to the phosphoglycerate kinase family. In terms of assembly, monomer.

It is found in the cytoplasm. It carries out the reaction (2R)-3-phosphoglycerate + ATP = (2R)-3-phospho-glyceroyl phosphate + ADP. The protein operates within carbohydrate degradation; glycolysis; pyruvate from D-glyceraldehyde 3-phosphate: step 2/5. The polypeptide is Phosphoglycerate kinase (Lactiplantibacillus plantarum (strain ATCC BAA-793 / NCIMB 8826 / WCFS1) (Lactobacillus plantarum)).